The sequence spans 205 residues: Recombination protein RecR (205 aa).

The C4-type zinc finger occupies 58–75 (CSLCQNVTDKEIDPCNIC). Residues 83–182 (RVVCVVEAPN…KVTRIARGIP (100 aa)) enclose the Toprim domain.

The protein belongs to the RecR family.

In terms of biological role, may play a role in DNA repair. It seems to be involved in an RecBC-independent recombinational process of DNA repair. It may act with RecF and RecO. In Chloroherpeton thalassium (strain ATCC 35110 / GB-78), this protein is Recombination protein RecR.